The chain runs to 151 residues: Large ribosomal subunit protein uL15 (151 aa).

Residues 1-14 (MRREKKSRAYRGSR) show a composition bias toward basic residues. The disordered stretch occupies residues 1-33 (MRREKKSRAYRGSRTHGWGRVGQHRKSGSRGGR).

Belongs to the universal ribosomal protein uL15 family. Part of the 50S ribosomal subunit.

Its function is as follows. Binds to the 23S rRNA. The polypeptide is Large ribosomal subunit protein uL15 (Thermofilum pendens (strain DSM 2475 / Hrk 5)).